Here is a 512-residue protein sequence, read N- to C-terminus: GMP synthase [glutamine-hydrolyzing] (512 aa).

Residues 6-195 (KIIILDFGSQ…VFNICGCQPK (190 aa)) enclose the Glutamine amidotransferase type-1 domain. The active-site Nucleophile is C83. Catalysis depends on residues H169 and E171. The GMPS ATP-PPase domain maps to 196–387 (WKITEFISAA…LGIDFKFVYK (192 aa)). 223–229 (SGGVDSS) is an ATP binding site.

Homodimer.

The enzyme catalyses XMP + L-glutamine + ATP + H2O = GMP + L-glutamate + AMP + diphosphate + 2 H(+). Its pathway is purine metabolism; GMP biosynthesis; GMP from XMP (L-Gln route): step 1/1. Its function is as follows. Catalyzes the synthesis of GMP from XMP. The sequence is that of GMP synthase [glutamine-hydrolyzing] from Spiroplasma kunkelii.